Here is a 232-residue protein sequence, read N- to C-terminus: Ion-translocating oxidoreductase complex subunit E (232 aa).

6 helical membrane-spanning segments follow: residues Leu12–Val31, Leu39–Leu59, Ile69–Ala89, Phe92–Ile112, Ala125–Leu145, and Pro182–Gly202.

It belongs to the NqrDE/RnfAE family. The complex is composed of six subunits: RnfA, RnfB, RnfC, RnfD, RnfE and RnfG.

Its subcellular location is the cell inner membrane. Part of a membrane-bound complex that couples electron transfer with translocation of ions across the membrane. The sequence is that of Ion-translocating oxidoreductase complex subunit E from Sodalis glossinidius (strain morsitans).